Reading from the N-terminus, the 186-residue chain is MLTPILALTALALIAGALLGFAAVRFRVEGNPIADQVDAVLPQTQCGQCGFGGCRPYAEAIAAGEAEINRCPPGGQDTVQTLADLLGVEPLPLDEERGEAPHTPQVAWVDEAVCIGCTRCIQACPVDAILGAAKQMHTVLKGECTGCGLCVDPCPVDCIHMVPVDLDLAEWHWPLPQNDTARREVA.

Residues 1-23 form a hydrophobic region; it reads MLTPILALTALALIAGALLGFAA. The 60-residue stretch at 29 to 88 folds into the 4Fe-4S domain; sequence EGNPIADQVDAVLPQTQCGQCGFGGCRPYAEAIAAGEAEINRCPPGGQDTVQTLADLLGV. [4Fe-4S] cluster is bound by residues Cys46, Cys49, Cys54, Cys71, Cys114, Cys117, Cys120, Cys124, Cys144, Cys147, Cys150, and Cys154. 4Fe-4S ferredoxin-type domains follow at residues 105–134 and 135–164; these read QVAW…GAAK and QMHT…MVPV.

The protein belongs to the 4Fe4S bacterial-type ferredoxin family. RnfB subfamily. As to quaternary structure, the complex is composed of six subunits: RnfA, RnfB, RnfC, RnfD, RnfE and RnfG. Requires [4Fe-4S] cluster as cofactor.

The protein resides in the cell inner membrane. In terms of biological role, part of a membrane-bound complex that couples electron transfer with translocation of ions across the membrane. This Alkalilimnicola ehrlichii (strain ATCC BAA-1101 / DSM 17681 / MLHE-1) protein is Ion-translocating oxidoreductase complex subunit B.